Here is a 96-residue protein sequence, read N- to C-terminus: Co-chaperonin GroES (96 aa).

This sequence belongs to the GroES chaperonin family. Heptamer of 7 subunits arranged in a ring. Interacts with the chaperonin GroEL.

The protein localises to the cytoplasm. Functionally, together with the chaperonin GroEL, plays an essential role in assisting protein folding. The GroEL-GroES system forms a nano-cage that allows encapsulation of the non-native substrate proteins and provides a physical environment optimized to promote and accelerate protein folding. GroES binds to the apical surface of the GroEL ring, thereby capping the opening of the GroEL channel. This chain is Co-chaperonin GroES, found in Methylorubrum populi (strain ATCC BAA-705 / NCIMB 13946 / BJ001) (Methylobacterium populi).